The following is a 527-amino-acid chain: Cytochrome P450 monooxygenase olcJ (527 aa).

The helical transmembrane segment at 21–43 threads the bilayer; sequence GLLTRYNVFMAISITVTALYLIH. Cysteine 464 lines the heme pocket.

This sequence belongs to the cytochrome P450 family. Heme serves as cofactor.

It is found in the membrane. Its pathway is secondary metabolite biosynthesis; terpenoid biosynthesis. Cytochrome P450 monooxygenase; part of the gene cluster that mediates the biosynthesis of 15-deoxyoxalicine B. The first step of the pathway is the synthesis of nicotinyl-CoA from nicotinic acid by the nicotinic acid-CoA ligase olcI. Nicotinyl-CoA is then a substrate of polyketide synthase olcA to produce 4-hydroxy-6-(3-pyridinyl)-2H-pyran-2-one (HPPO) which is further prenylated by the polyprenyl transferase olcH to yield geranylgeranyl-HPPO. Geranylgeranyl pyrophosphate is provided by the cluster-specific geranylgeranyl pyrophosphate synthase olcC. The FAD-dependent monooxygenase olcE catalyzes the epoxidation of geranylgeranyl-HPPO and the terpene cyclase olcD catalyzes the cyclization of the terpenoid component, resulting in the formation of the tricyclic terpene moiety seen in predecaturin E. The cytochrome P450 monooxygenase then catalyzes the allylic oxidation of predecaturin E, which is followed by spirocylization with concomitant loss of one molecule of water to form decaturin E. Decaturin E is the substrate of the cytochrome P450 monooxygenase olcJ which hydroxylates it at the C-29 position to form decaturin F. The short-chain dehydrogenase/reductase olcF may catalyze the oxidation of decaturin F to generate the 29-hydroxyl-27-one intermediate, and subsequent hemiacetal formation probably leads to the formation of decaturin C. The dioxygenase olcK may be a peroxisomal enzyme that catalyzes the hydroxylation of decaturin C into decaturin A once decaturin C is shuttled into the peroxisome by the MFS transporter olcL. Finally the cytochrome P450 monooxygenase olcB catalyzes the oxidative rearrangement to yield 15-deoxyoxalicine B. In the absence of olcJ, decaturin E may be shunted to a pathway in which it is oxidized to a ketone, possibly by olcF, to form decaturin D, which undergoes further allylic oxidation to yield decaturin G. Moreover, in the absence of oclK or oclL, oclB can convert decaturin C into 15-deoxyoxalicine A. The polypeptide is Cytochrome P450 monooxygenase olcJ (Penicillium canescens).